The chain runs to 412 residues: MDQIILQDPELAQAIILESGRQIDKLELIASENIASTAVREAQSTILTNKYAEGYPGKRYYGGCEYVDIAENLAIERAKALFHSEYANVQPHSGSQANMGAYFALIKPRDTILGMNLSHGGHLTHGSPVNFSGRLFNIVSYGVNKETGLIDYEEVAKLAEKHKPQLIVAGASAYPRIIDFSKFRSIADTIGAKLLVDMAHIAGLVATNLHPSPIPYAHITTTTTHKTLRGPRGGMILSTEDMGKVINSQIFPGIQGGPLMHVIAAKAVALGEASKASFVTYQKQVILNAKTLAKQLLDAGFNLVSGGTDNHLLLIDLTNKKITGKDAEKALDQAGITVNKNTVPFETLSPFVTSGIRIGTPALTTRGLCEQDMIKVANWIVTALNNINNETQLKEINKEVTYFARQFPLFSW.

Residues L117 and 121–123 (GHL) contribute to the (6S)-5,6,7,8-tetrahydrofolate site. K226 carries the N6-(pyridoxal phosphate)lysine modification. A (6S)-5,6,7,8-tetrahydrofolate-binding site is contributed by 349-351 (SPF).

The protein belongs to the SHMT family. In terms of assembly, homodimer. Requires pyridoxal 5'-phosphate as cofactor.

Its subcellular location is the cytoplasm. The enzyme catalyses (6R)-5,10-methylene-5,6,7,8-tetrahydrofolate + glycine + H2O = (6S)-5,6,7,8-tetrahydrofolate + L-serine. It functions in the pathway one-carbon metabolism; tetrahydrofolate interconversion. The protein operates within amino-acid biosynthesis; glycine biosynthesis; glycine from L-serine: step 1/1. Catalyzes the reversible interconversion of serine and glycine with tetrahydrofolate (THF) serving as the one-carbon carrier. This reaction serves as the major source of one-carbon groups required for the biosynthesis of purines, thymidylate, methionine, and other important biomolecules. Also exhibits THF-independent aldolase activity toward beta-hydroxyamino acids, producing glycine and aldehydes, via a retro-aldol mechanism. This chain is Serine hydroxymethyltransferase, found in Lawsonia intracellularis (strain PHE/MN1-00).